A 76-amino-acid chain; its full sequence is FMRFamide-related neuropeptides (76 aa).

A signal peptide spans 1–27; that stretch reads MCVQTRMLVAVAVVLVVLAVLSDPVSA. Phenylalanine amide is present on phenylalanine 39.

Belongs to the FARP (FMRFamide related peptide) family. Olfactory lobe and accessory lobe, olfactory globular tract, olfactory lobe cells (at protein level). Widely distributed throughout nervous system.

It is found in the secreted. GYRKPPFNGSIF-amide may be involved in olfaction and contraction of hindgut. This chain is FMRFamide-related neuropeptides, found in Procambarus clarkii (Red swamp crayfish).